Here is a 582-residue protein sequence, read N- to C-terminus: Threonine--tRNA ligase (582 aa).

The segment at 185 to 478 is catalytic; sequence DHRKLGKELE…LTEQYGGAFP (294 aa). The Zn(2+) site is built by Cys278, His329, and His455.

The protein belongs to the class-II aminoacyl-tRNA synthetase family. In terms of assembly, homodimer. The cofactor is Zn(2+).

It is found in the cytoplasm. The catalysed reaction is tRNA(Thr) + L-threonine + ATP = L-threonyl-tRNA(Thr) + AMP + diphosphate + H(+). In terms of biological role, catalyzes the attachment of threonine to tRNA(Thr) in a two-step reaction: L-threonine is first activated by ATP to form Thr-AMP and then transferred to the acceptor end of tRNA(Thr). Also edits incorrectly charged L-seryl-tRNA(Thr). In Dehalococcoides mccartyi (strain CBDB1), this protein is Threonine--tRNA ligase.